The sequence spans 648 residues: Probable alpha-galactosidase D (648 aa).

A signal peptide spans 1-17 (MESIVWLLLLSPALVAG). N-linked (GlcNAc...) asparagine glycans are attached at residues N84 and N90. C123 and C156 are disulfide-bonded. The active-site Nucleophile is the D154. 199–203 (EWGID) lines the substrate pocket. D221 acts as the Proton donor in catalysis. 3 N-linked (GlcNAc...) asparagine glycosylation sites follow: N339, N505, and N572.

The protein belongs to the glycosyl hydrolase 27 family.

The protein resides in the secreted. The enzyme catalyses Hydrolysis of terminal, non-reducing alpha-D-galactose residues in alpha-D-galactosides, including galactose oligosaccharides, galactomannans and galactolipids.. Its function is as follows. Hydrolyzes a variety of simple alpha-D-galactoside as well as more complex molecules such as oligosaccharides and polysaccharides. This is Probable alpha-galactosidase D (aglD) from Neosartorya fischeri (strain ATCC 1020 / DSM 3700 / CBS 544.65 / FGSC A1164 / JCM 1740 / NRRL 181 / WB 181) (Aspergillus fischerianus).